The primary structure comprises 113 residues: Hydrogenase maturation factor HypA (113 aa).

H2 is a Ni(2+) binding site. Zn(2+) contacts are provided by C73, C76, C89, and C92.

It belongs to the HypA/HybF family.

Involved in the maturation of [NiFe] hydrogenases. Required for nickel insertion into the metal center of the hydrogenase. This is Hydrogenase maturation factor HypA from Bradyrhizobium sp. (strain ORS 278).